The sequence spans 379 residues: Chaperone protein DnaJ (379 aa).

In terms of domain architecture, J spans 5 to 69 (DYYEVLGISK…NKRATIDQFG (65 aa)). The CR-type zinc finger occupies 136–218 (GTTKEISIRK…CHGKGTENKT (83 aa)). The Zn(2+) site is built by Cys149, Cys152, Cys166, Cys169, Cys192, Cys195, Cys206, and Cys209. 4 CXXCXGXG motif repeats span residues 149–156 (CETCHGDG), 166–173 (CSYCNGAG), 192–199 (CPKCNGSG), and 206–213 (CPTCHGKG).

It belongs to the DnaJ family. Homodimer. Zn(2+) serves as cofactor.

Its subcellular location is the cytoplasm. Functionally, participates actively in the response to hyperosmotic and heat shock by preventing the aggregation of stress-denatured proteins and by disaggregating proteins, also in an autonomous, DnaK-independent fashion. Unfolded proteins bind initially to DnaJ; upon interaction with the DnaJ-bound protein, DnaK hydrolyzes its bound ATP, resulting in the formation of a stable complex. GrpE releases ADP from DnaK; ATP binding to DnaK triggers the release of the substrate protein, thus completing the reaction cycle. Several rounds of ATP-dependent interactions between DnaJ, DnaK and GrpE are required for fully efficient folding. Also involved, together with DnaK and GrpE, in the DNA replication of plasmids through activation of initiation proteins. This is Chaperone protein DnaJ from Staphylococcus aureus.